The chain runs to 309 residues: Homoserine O-acetyltransferase (309 aa).

Cys148 serves as the catalytic Acyl-thioester intermediate. Substrate is bound by residues Lys169 and Ser198. The Proton acceptor role is filled by His241. Glu243 is an active-site residue. Arg255 serves as a coordination point for substrate.

It belongs to the MetA family.

The protein resides in the cytoplasm. It catalyses the reaction L-homoserine + acetyl-CoA = O-acetyl-L-homoserine + CoA. Its pathway is amino-acid biosynthesis; L-methionine biosynthesis via de novo pathway; O-acetyl-L-homoserine from L-homoserine: step 1/1. Its function is as follows. Transfers an acetyl group from acetyl-CoA to L-homoserine, forming acetyl-L-homoserine. In vitro, can also use propionyl-CoA as acyl donor. This Shouchella clausii (Alkalihalobacillus clausii) protein is Homoserine O-acetyltransferase.